Consider the following 375-residue polypeptide: Neuropeptide Y receptor type 4 (375 aa).

At 1-39 (MNTSHFLAPLFPGSLQGKNGTNPLDSPYNFSDGCQDSAE) the chain is on the extracellular side. N-linked (GlcNAc...) asparagine glycans are attached at residues N2, N19, and N29. Residues 40 to 60 (LLAFIITTYSIETILGVLGNL) traverse the membrane as a helical segment. At 61–78 (CLIFVTTRQKEKSNVTNL) the chain is on the cytoplasmic side. The helical transmembrane segment at 79 to 99 (LIANLAFSDFLMCLICQPLTV) threads the bilayer. The Extracellular portion of the chain corresponds to 100–116 (TYTIMDYWIFGEVLCKM). C114 and C201 are disulfide-bonded. A helical membrane pass occupies residues 117–137 (LTFIQCMSVTVSILSLVLVAL). Over 138 to 155 (ERHQLIINPTGWKPSIFQ) the chain is Cytoplasmic. A helical membrane pass occupies residues 156-176 (AYLGIVVIWFVSCFLSLPFLA). Residues 177–211 (NSTLNDLFHYNHSKVVEFLEDKVVCFVSWSSDHHR) are Extracellular-facing. Residue N187 is glycosylated (N-linked (GlcNAc...) asparagine). Residues 212 to 232 (LIYTTFLLLFQYCIPLAFILV) traverse the membrane as a helical segment. Over 233–266 (CYIRIYQRLQRQKHVFHAHACSSRAGQMKRINSM) the chain is Cytoplasmic. A helical transmembrane segment spans residues 267-287 (LMTMVTAFAVLWLPLHVFNTL). Residues 288-301 (EDWYQEAIPACHGN) are Extracellular-facing. Residues 302-322 (LIFLMCHLLAMASTCVNPFIY) traverse the membrane as a helical segment. The Cytoplasmic portion of the chain corresponds to 323–375 (GFLNINFKKDIKALVLTCHCRSPRGESEHLPLSTVHTDLSKGSMRMGSKSNFI). A lipid anchor (S-palmitoyl cysteine) is attached at C340.

It belongs to the G-protein coupled receptor 1 family. Heart, detected in small intestine.

It is found in the cell membrane. Functionally, g protein-coupled receptor for PPY/pancreatic polypeptide/PP that is negatively coupled to cAMP. Has much lower affinity for the NPY/neuropeptide Y and PYY/peptide YY. This is Neuropeptide Y receptor type 4 (Npy4r) from Mus musculus (Mouse).